Reading from the N-terminus, the 423-residue chain is UDP-N-acetylglucosamine 1-carboxyvinyltransferase (423 aa).

22–23 (KN) is a binding site for phosphoenolpyruvate. A UDP-N-acetyl-alpha-D-glucosamine-binding site is contributed by Arg-93. The active-site Proton donor is the Cys-117. Cys-117 carries the 2-(S-cysteinyl)pyruvic acid O-phosphothioketal modification. UDP-N-acetyl-alpha-D-glucosamine contacts are provided by residues 122–126 (RPIDL), Asp-307, and Val-329.

It belongs to the EPSP synthase family. MurA subfamily.

The protein localises to the cytoplasm. It catalyses the reaction phosphoenolpyruvate + UDP-N-acetyl-alpha-D-glucosamine = UDP-N-acetyl-3-O-(1-carboxyvinyl)-alpha-D-glucosamine + phosphate. The protein operates within cell wall biogenesis; peptidoglycan biosynthesis. Its function is as follows. Cell wall formation. Adds enolpyruvyl to UDP-N-acetylglucosamine. The chain is UDP-N-acetylglucosamine 1-carboxyvinyltransferase from Chlorobium chlorochromatii (strain CaD3).